We begin with the raw amino-acid sequence, 233 residues long: Translation initiation factor 6 (233 aa).

It belongs to the eIF-6 family.

Binds to the 50S ribosomal subunit and prevents its association with the 30S ribosomal subunit to form the 70S initiation complex. The chain is Translation initiation factor 6 from Aeropyrum pernix (strain ATCC 700893 / DSM 11879 / JCM 9820 / NBRC 100138 / K1).